The following is a 276-amino-acid chain: Diaminopimelate epimerase (276 aa).

The substrate site is built by N13, Q46, and N66. C75 acts as the Proton donor in catalysis. Residues G76 to N77, N159, N192, and E210 to R211 each bind substrate. Catalysis depends on C219, which acts as the Proton acceptor. G220–S221 contributes to the substrate binding site.

It belongs to the diaminopimelate epimerase family. Homodimer.

The protein resides in the cytoplasm. The enzyme catalyses (2S,6S)-2,6-diaminopimelate = meso-2,6-diaminopimelate. The protein operates within amino-acid biosynthesis; L-lysine biosynthesis via DAP pathway; DL-2,6-diaminopimelate from LL-2,6-diaminopimelate: step 1/1. Its function is as follows. Catalyzes the stereoinversion of LL-2,6-diaminopimelate (L,L-DAP) to meso-diaminopimelate (meso-DAP), a precursor of L-lysine and an essential component of the bacterial peptidoglycan. This Aliivibrio fischeri (strain ATCC 700601 / ES114) (Vibrio fischeri) protein is Diaminopimelate epimerase.